A 459-amino-acid chain; its full sequence is UDP-N-acetylmuramoylalanine--D-glutamate ligase (459 aa).

131–137 (GANGKST) provides a ligand contact to ATP.

The protein belongs to the MurCDEF family.

Its subcellular location is the cytoplasm. It carries out the reaction UDP-N-acetyl-alpha-D-muramoyl-L-alanine + D-glutamate + ATP = UDP-N-acetyl-alpha-D-muramoyl-L-alanyl-D-glutamate + ADP + phosphate + H(+). Its pathway is cell wall biogenesis; peptidoglycan biosynthesis. In terms of biological role, cell wall formation. Catalyzes the addition of glutamate to the nucleotide precursor UDP-N-acetylmuramoyl-L-alanine (UMA). This is UDP-N-acetylmuramoylalanine--D-glutamate ligase from Methylococcus capsulatus (strain ATCC 33009 / NCIMB 11132 / Bath).